Reading from the N-terminus, the 355-residue chain is GPN-loop GTPase 1 (355 aa).

Residues 1-30 are disordered; the sequence is MAEKAENLPSSSAEASEEPSPQTGPNVNQK. Residues 9-21 are compositionally biased toward low complexity; that stretch reads PSSSAEASEEPSP. 40-45 provides a ligand contact to GTP; sequence GSGKTT. Residues 97 to 99 carry the Gly-Pro-Asn (GPN)-loop; involved in dimer interface motif; sequence GPN. 200–203 lines the GTP pocket; sequence NKAD. A coiled-coil region spans residues 286–311; the sequence is EKVLAEKKLLDEEERKKRDEETLKGK.

Belongs to the GPN-loop GTPase family. As to quaternary structure, heterodimer with GPN3. Binds to RNA polymerase II (RNAPII).

It is found in the cytoplasm. Its subcellular location is the nucleus. Its function is as follows. Small GTPase required for proper nuclear import of RNA polymerase II (RNAPII). May act at an RNAP assembly step prior to nuclear import. This chain is GPN-loop GTPase 1, found in Caenorhabditis elegans.